The following is a 117-amino-acid chain: MKVLVICAVLFLTIFSNSSAETEDDFLEDESFEADDVIPFLAREQVRSDCTLRNHDCTDDRHSCCRSKMFKDVCKCFYPSQRSDTARAKKELCTCQQDKHLKFIEKGLQKAKVLVAG.

Positions M1–A20 are cleaved as a signal peptide. Residues E21–R47 constitute a propeptide that is removed on maturation. Cystine bridges form between C50/C65, C57/C74, C64/C95, and C76/C93. Positions R82 to R87 are excised as a propeptide. Alanine amide is present on A116.

Belongs to the neurotoxin 19 (CSTX) family. 12 subfamily. In terms of assembly, heterodimer of A and B chains; disulfide-linked. Interacts with CSTX-1 (AC P81694), and with CSTX-9 (AC P58604). In terms of tissue distribution, expressed by the venom gland.

It localises to the secreted. Its subcellular location is the target cell membrane. Functionally, synergistic toxin that induces or increases a cytolytic effect when combined with CSTX-1 (AC P81694) or CSTX-9 (AC P58604). When alone, has a weak insecticidal activity, with an unknown molecular target. The polypeptide is Toxin CSTX-12 (Cupiennius salei (American wandering spider)).